The sequence spans 902 residues: MVDTKTPGDKKLSVPSKTLSLKPRVETGTVRQSFSHGRSKQVVVEKRGKRRIGDGPEPHAPEVTAKPAPAAPAPSRPAPPPAPPRNAGSGVVLRTLTEDERSARASALADAKLREVEERRQAEEEAQRRAVREAAERAEREAAEARRKAEDERHRHEDEAKRKAETEAKKRFGEGEQPASAARPATAAPAAPAPRPGAPAARPGTTTTRPGTTTARPATTTAQRPGAPAGRGPAVAAEPDEDEAPRQIRRGPGGAARPAPPPKTTHKPGPQKERGRLTVVTALNADEVRERSIASFRRRTQRLKGHASNEPKEKLIREVIIPEAITIQELANRMAERAVDVIRMLMKQGAMHKITDVIDADTAQLIAEELGHTVKRVAASDVEEGLFDQVDDSTDTETRSPVVTVMGHVDHGKTSLLDALRHANVVSGEAGGITQHIGAYQVVSPESGKKITFIDTPGHAAFTAMRARGAKVTDIVVLVVAADDGVMPQTVEAINHAKAARVPIIVAINKIDKPDAKPERVRTELLQHEVQVESFGGDVVDVEVSAKNKTNLDKLLEMIALQADILDLKTNSERPAEGTVIEAKLDRGRGPVATVLVQRGTLRVGDIIVAGAEMGRVRALISDQGETVQEAGPSVPVEVLGFNGPPEAGDRLAVVENEARARQVTSYRAHQKRENAAASISGMRGSLEQMMSQLKTAGRKEFPLIIKADVQGSLEAILGSLEKLGTDEVAARILHAGVGGISESDVTLAEGFNAAIIGFSVRANKEAAAAAKRNGIEIRYYNIIYDLVDDVKKAMSGLLAPTLRETMLGNAAILEIFNISKVGKVAGCRVTDGTVERGANVRLIRDNVVVHEGKLSTLKRFKDEVKEVQSGQECGMAFENYHDMRAGDVIECYRVETIQRSL.

2 stretches are compositionally biased toward basic and acidic residues: residues 1 to 12 and 43 to 60; these read MVDTKTPGDKKL and VVEK…EPHA. A disordered region spans residues 1–276; the sequence is MVDTKTPGDK…KPGPQKERGR (276 aa). Over residues 69–84 the composition is skewed to pro residues; that stretch reads PAAPAPSRPAPPPAPP. The span at 111–174 shows a compositional bias: basic and acidic residues; sequence AKLREVEERR…ETEAKKRFGE (64 aa). Composition is skewed to low complexity over residues 181–190 and 198–237; these read AARPATAAPA and APAA…AVAA. In terms of domain architecture, tr-type G spans 398–567; sequence TRSPVVTVMG…MIALQADILD (170 aa). The tract at residues 407–414 is G1; sequence GHVDHGKT. A GTP-binding site is contributed by 407 to 414; the sequence is GHVDHGKT. Residues 432 to 436 form a G2 region; the sequence is GITQH. The G3 stretch occupies residues 455 to 458; sequence DTPG. Residues 455-459 and 509-512 each bind GTP; these read DTPGH and NKID. The tract at residues 509–512 is G4; it reads NKID. Residues 545–547 form a G5 region; that stretch reads SAK.

The protein belongs to the TRAFAC class translation factor GTPase superfamily. Classic translation factor GTPase family. IF-2 subfamily.

Its subcellular location is the cytoplasm. Its function is as follows. One of the essential components for the initiation of protein synthesis. Protects formylmethionyl-tRNA from spontaneous hydrolysis and promotes its binding to the 30S ribosomal subunits. Also involved in the hydrolysis of GTP during the formation of the 70S ribosomal complex. The protein is Translation initiation factor IF-2 of Bradyrhizobium diazoefficiens (strain JCM 10833 / BCRC 13528 / IAM 13628 / NBRC 14792 / USDA 110).